A 129-amino-acid polypeptide reads, in one-letter code: Large ribosomal subunit protein bL12c (129 aa).

A compositionally biased stretch (basic and acidic residues) spans 101–123 (KPIKEGMSKADAEAGKKQLEEAG). A disordered region spans residues 101-129 (KPIKEGMSKADAEAGKKQLEEAGAKATLK).

Belongs to the bacterial ribosomal protein bL12 family. Homodimer. Part of the ribosomal stalk of the 50S ribosomal subunit. Forms a multimeric L10(L12)X complex, where L10 forms an elongated spine to which 2 to 4 L12 dimers bind in a sequential fashion. Binds GTP-bound translation factors.

Its subcellular location is the plastid. The protein localises to the chloroplast. In terms of biological role, forms part of the ribosomal stalk which helps the ribosome interact with GTP-bound translation factors. Is thus essential for accurate translation. In Guillardia theta (Cryptophyte), this protein is Large ribosomal subunit protein bL12c.